The sequence spans 632 residues: Armadillo repeat-containing X-linked protein 2 (632 aa).

At 1–6 (MSRVRD) the chain is on the mitochondrial intermembrane side. Residues 1–6 (MSRVRD) form a mitochondrion outer membrane (MOM)-targeting sequence region. Residues 7 to 25 (AGCVAAGIVIGAGAWYCVY) traverse the membrane as a helical; Signal-anchor segment. The tract at residues 26 to 40 (KYTRGRDQTKKRMAK) is mitochondrion outer membrane (MOM)-targeting sequence. Residues 26–632 (KYTRGRDQTK…VKVIKLVNKF (607 aa)) are Cytoplasmic-facing. 3 disordered regions span residues 68-124 (GFSP…AGVG), 160-304 (APKV…KVEV), and 335-369 (VPDS…RPVA). Composition is skewed to low complexity over residues 86 to 120 (EASA…EADG) and 211 to 241 (VASP…SPGT). The span at 336 to 356 (PDSEEGESGWTDTESDSDSEP) shows a compositional bias: acidic residues. ARM repeat units lie at residues 376-416 (PYEI…NNAN), 418-457 (SCNQ…NLSE), and 498-537 (ITND…NFAE).

The protein belongs to the eutherian X-chromosome-specific Armcx family. As to expression, expressed at high levels ovary, heart, testis, prostate, brain, spleen and colon. Expressed at very low levels in liver and thymus. Not expressed in peripheral blood leukocytes. Not expressed in pancreas and ovarian carcinomas.

It is found in the mitochondrion. The protein localises to the mitochondrion outer membrane. Functionally, may regulate the dynamics and distribution of mitochondria in neural cells. This is Armadillo repeat-containing X-linked protein 2 (ARMCX2) from Homo sapiens (Human).